The chain runs to 591 residues: Peroxisome assembly protein 2 (591 aa).

Positions 1–78 (MSDSDPKPTA…TNIDTNNNTN (78 aa)) are disordered. Over 1 to 148 (MSDSDPKPTA…TSREGTRPAF (148 aa)) the chain is Peroxisomal matrix. Positions 7-26 (KPTAAKGAAPTSIPNSTRNP) are enriched in low complexity. Residues 27–54 (NPTPPNPNPNPNPISTPAPTPTATPSPP) are compositionally biased toward pro residues. The segment covering 55-78 (IASSSNNGNNSTRSTNIDTNNNTN) has biased composition (low complexity). Residues 149–175 (RVGQVDAELLDEELVELLRGQVREALR) form a helical membrane-spanning segment. Residues 176-196 (YVGGGGGGGGGGGGGGVGSGV) lie on the Cytoplasmic side of the membrane. A helical transmembrane segment spans residues 197 to 222 (AQDWEAEISLALRAVLFKLTVWDHDA). The Peroxisomal matrix segment spans residues 223–246 (TYGAALQNLKYTDARRDGPALAPP). A helical membrane pass occupies residues 247–273 (SRWQKALYGLVTVGGRYLWAKWEDWLL). The Cytoplasmic segment spans residues 274–283 (EQDDGFEGPS). The chain crosses the membrane as a helical span at residues 284–314 (PRVKRLARWTSALSTLHASAALVSFLVFLLH). The Peroxisomal matrix portion of the chain corresponds to 315–341 (GRYRTLLDRLLRMRLAPPTSQVSREVS). The helical transmembrane segment at 342–365 (FEYLNRQLVWHAFTEFLLFVLPLV) threads the bilayer. Residues 366-591 (GINRWRRWLA…EDGLDEDPES (226 aa)) lie on the Cytoplasmic side of the membrane. The Zn(2+) site is built by cysteine 408, cysteine 411, cysteine 449, cysteine 451, cysteine 454, cysteine 457, cysteine 472, and cysteine 475. The segment at 408–475 (CAICYRDQNS…EGEGWPCLRC (68 aa)) adopts an RING-type; atypical zinc-finger fold. The interval 512–591 (KAPSDHEEEE…EDGLDEDPES (80 aa)) is disordered. Acidic residues-rich tracts occupy residues 517 to 537 (HEEEENEEEEEQQGELGENEG) and 575 to 591 (SEDYEAEEDGLDEDPES).

The protein belongs to the pex2/pex10/pex12 family. Component of the PEX2-PEX10-PEX12 retrotranslocation channel, composed of PEX2, PEX10 and PEX12.

It is found in the peroxisome membrane. It carries out the reaction [E2 ubiquitin-conjugating enzyme]-S-ubiquitinyl-L-cysteine + [acceptor protein]-L-cysteine = [E2 ubiquitin-conjugating enzyme]-L-cysteine + [acceptor protein]-S-ubiquitinyl-L-cysteine.. It functions in the pathway protein modification; protein ubiquitination. Its function is as follows. E3 ubiquitin-protein ligase component of a retrotranslocation channel required for peroxisome organization by mediating export of the PEX5 receptor from peroxisomes to the cytosol, thereby promoting PEX5 recycling. The retrotranslocation channel is composed of PEX2, PEX10 and PEX12; each subunit contributing transmembrane segments that coassemble into an open channel that specifically allows the passage of PEX5 through the peroxisomal membrane. PEX2 also regulates peroxisome organization by acting as a E3 ubiquitin-protein ligase. PEX2 ubiquitinates PEX5 during its passage through the retrotranslocation channel: catalyzes monoubiquitination of PEX5 at 'Cys-6', a modification that acts as a signal for PEX5 extraction into the cytosol. In Thermothelomyces thermophilus (strain ATCC 42464 / BCRC 31852 / DSM 1799) (Sporotrichum thermophile), this protein is Peroxisome assembly protein 2.